Reading from the N-terminus, the 445-residue chain is N-succinylarginine dihydrolase (445 aa).

Residues Ala-19–Ser-28, Asn-110, and His-137–Arg-138 each bind substrate. Residue Glu-174 is part of the active site. Residue Arg-214 coordinates substrate. His-250 is an active-site residue. The substrate site is built by Asp-252 and Asn-363. Cys-369 serves as the catalytic Nucleophile.

It belongs to the succinylarginine dihydrolase family. Homodimer.

It carries out the reaction N(2)-succinyl-L-arginine + 2 H2O + 2 H(+) = N(2)-succinyl-L-ornithine + 2 NH4(+) + CO2. It functions in the pathway amino-acid degradation; L-arginine degradation via AST pathway; L-glutamate and succinate from L-arginine: step 2/5. Catalyzes the hydrolysis of N(2)-succinylarginine into N(2)-succinylornithine, ammonia and CO(2). In Aeromonas hydrophila subsp. hydrophila (strain ATCC 7966 / DSM 30187 / BCRC 13018 / CCUG 14551 / JCM 1027 / KCTC 2358 / NCIMB 9240 / NCTC 8049), this protein is N-succinylarginine dihydrolase.